The chain runs to 316 residues: Secondary metabolism regulator laeA (316 aa).

The protein belongs to the methyltransferase superfamily. LaeA methyltransferase family. In terms of assembly, component of the heterotrimeric velvet complex composed of laeA, ve1 and velB; Ve1 acting as a bridging protein between laeA and velB. Interacts directly with veA.

It is found in the nucleus. The protein localises to the cytoplasm. It carries out the reaction L-methionyl-[protein] + S-adenosyl-L-methionine = S-methyl-L-methionyl-[protein] + S-adenosyl-L-homocysteine. Its function is as follows. Methyltransferase that performs automethylation. No other methyl-accepting substrate has been identified yet. Component of the velvet transcription factor complex that acts as a global regulator for secondary metabolite gene expression. Controls the expression of the mycotoxins trichothecenes and zearalenon gene clusters. Negatively controls perithecial induction, but positively controls virulence toward the host plant. The polypeptide is Secondary metabolism regulator laeA (Gibberella zeae (strain ATCC MYA-4620 / CBS 123657 / FGSC 9075 / NRRL 31084 / PH-1) (Wheat head blight fungus)).